A 257-amino-acid polypeptide reads, in one-letter code: Zinc-finger homeodomain protein 6 (257 aa).

Positions 1–35 (MEFRGHDEPVDEMGVAYGRTPPSSSSSPAASASAG) are disordered. Over residues 21-35 (PPSSSSSPAASASAG) the composition is skewed to low complexity. The ZF-HD dimerization-type; degenerate zinc finger occupies 45–93 (YHECLRNHAAAMGGHVVDGCGEFMPMPGDAADALKCAACGCHRSFHRKD). Residues 106–125 (PSPPTPRVPLLMPPPQPQPH) show a composition bias toward pro residues. Disordered regions lie at residues 106–182 (PSPP…TKFT) and 228–257 (NNKS…QQQQ). The segment covering 141-155 (YHHTPSGSGGTTTES) has biased composition (low complexity). Residues 174-237 (RKRFRTKFTP…NNKSSIGSSS (64 aa)) constitute a DNA-binding region (homeobox). A compositionally biased stretch (low complexity) spans 242 to 257 (RRQPQEQQSQQQQQQQ).

As to quaternary structure, homo- and heterodimer with other ZFHD proteins.

It localises to the nucleus. Functionally, putative transcription factor. In Oryza sativa subsp. indica (Rice), this protein is Zinc-finger homeodomain protein 6 (ZHD6).